The chain runs to 144 residues: Large ribosomal subunit protein uL16 (144 aa).

This sequence belongs to the universal ribosomal protein uL16 family. As to quaternary structure, part of the 50S ribosomal subunit.

Functionally, binds 23S rRNA and is also seen to make contacts with the A and possibly P site tRNAs. The chain is Large ribosomal subunit protein uL16 from Heliobacterium modesticaldum (strain ATCC 51547 / Ice1).